The sequence spans 229 residues: Ribonuclease 3 (229 aa).

The region spanning 8–130 (LTELEKIVGY…IIGAIYLDSD (123 aa)) is the RNase III domain. Residue Glu-43 coordinates Mg(2+). The active site involves Asp-47. 2 residues coordinate Mg(2+): Asp-116 and Glu-119. Residue Glu-119 is part of the active site. Residues 157–227 (DPKTRLQELL…ATAALEHLQE (71 aa)) enclose the DRBM domain. Residues 201–229 (SPFKGTGTSRRKAEQAAATAALEHLQESA) form a disordered region.

This sequence belongs to the ribonuclease III family. As to quaternary structure, homodimer. The cofactor is Mg(2+).

Its subcellular location is the cytoplasm. It catalyses the reaction Endonucleolytic cleavage to 5'-phosphomonoester.. In terms of biological role, digests double-stranded RNA. Involved in the processing of primary rRNA transcript to yield the immediate precursors to the large and small rRNAs (23S and 16S). Processes some mRNAs, and tRNAs when they are encoded in the rRNA operon. Processes pre-crRNA and tracrRNA of type II CRISPR loci if present in the organism. The sequence is that of Ribonuclease 3 from Idiomarina loihiensis (strain ATCC BAA-735 / DSM 15497 / L2-TR).